Consider the following 261-residue polypeptide: HLA class II histocompatibility antigen, DQ beta 1 chain (261 aa).

The first 32 residues, 1-32 (MSWKKALRIPGGLRAATVTLMLAMLSTPVAEG), serve as a signal peptide directing secretion. Residues 33–126 (RDSPEDFVYQ…LELRTTLQRR (94 aa)) form a beta-1 region. The Extracellular segment spans residues 33-230 (RDSPEDFVYQ…RAQSESAQSK (198 aa)). Cystine bridges form between Cys-47–Cys-111 and Cys-149–Cys-205. A glycan (N-linked (GlcNAc...) asparagine) is linked at Asn-51. The beta-2 stretch occupies residues 127 to 220 (VEPTVTISPS…SLQNPITVEW (94 aa)). Residues 129–217 (PTVTISPSRT…EHPSLQNPIT (89 aa)) form the Ig-like C1-type domain. The segment at 221–230 (RAQSESAQSK) is connecting peptide. The helical transmembrane segment at 231-251 (MLSGIGGFVLGLIFLGLGLII) threads the bilayer. Over 252–261 (HHRSQKGLLH) the chain is Cytoplasmic.

Belongs to the MHC class II family. Heterodimer of an alpha and a beta subunit; also referred as MHC class II molecule. In the endoplasmic reticulum (ER) it forms a heterononamer; 3 MHC class II molecules bind to a CD74 homotrimer (also known as invariant chain or HLA class II histocompatibility antigen gamma chain). In the endosomal/lysosomal system; CD74 undergoes sequential degradation by various proteases; leaving a small fragment termed CLIP on each MHC class II molecule. MHC class II molecule interacts with HLA_DM, and HLA_DO in B-cells, in order to release CLIP and facilitate the binding of antigenic peptides.

Its subcellular location is the cell membrane. The protein localises to the endoplasmic reticulum membrane. It is found in the golgi apparatus. The protein resides in the trans-Golgi network membrane. It localises to the endosome membrane. Its subcellular location is the lysosome membrane. Binds peptides derived from antigens that access the endocytic route of antigen presenting cells (APC) and presents them on the cell surface for recognition by the CD4 T-cells. The peptide binding cleft accommodates peptides of 10-30 residues. The peptides presented by MHC class II molecules are generated mostly by degradation of proteins that access the endocytic route, where they are processed by lysosomal proteases and other hydrolases. Exogenous antigens that have been endocytosed by the APC are thus readily available for presentation via MHC II molecules, and for this reason this antigen presentation pathway is usually referred to as exogenous. As membrane proteins on their way to degradation in lysosomes as part of their normal turn-over are also contained in the endosomal/lysosomal compartments, exogenous antigens must compete with those derived from endogenous components. Autophagy is also a source of endogenous peptides, autophagosomes constitutively fuse with MHC class II loading compartments. In addition to APCs, other cells of the gastrointestinal tract, such as epithelial cells, express MHC class II molecules and CD74 and act as APCs, which is an unusual trait of the GI tract. To produce a MHC class II molecule that presents an antigen, three MHC class II molecules (heterodimers of an alpha and a beta chain) associate with a CD74 trimer in the ER to form a heterononamer. Soon after the entry of this complex into the endosomal/lysosomal system where antigen processing occurs, CD74 undergoes a sequential degradation by various proteases, including CTSS and CTSL, leaving a small fragment termed CLIP (class-II-associated invariant chain peptide). The removal of CLIP is facilitated by HLA-DM via direct binding to the alpha-beta-CLIP complex so that CLIP is released. HLA-DM stabilizes MHC class II molecules until primary high affinity antigenic peptides are bound. The MHC II molecule bound to a peptide is then transported to the cell membrane surface. In B-cells, the interaction between HLA-DM and MHC class II molecules is regulated by HLA-DO. Primary dendritic cells (DCs) also to express HLA-DO. Lysosomal microenvironment has been implicated in the regulation of antigen loading into MHC II molecules, increased acidification produces increased proteolysis and efficient peptide loading. The protein is HLA class II histocompatibility antigen, DQ beta 1 chain (HLA-DQB1) of Homo sapiens (Human).